The chain runs to 757 residues: MDVNPTLLFLKVPAQNAISTTFPYTGDPPYSHGTGTGYTMDTVNRTHQYSEKGKWTTNTETGAAQLNPIDGPLPEDNEPSGYAQTDCVLEAMAFLEESHPGIFENSCLETMEVVQQTRVDRLTQGRQTYDWTLNRNQPAATALANTIEVFRSNGLIANESGRLIDFLKDVIESMDKEEMEITTHFQRKRRVRDNMTKKMVTQRTIGKKKQRVNKRSYLIRALTLNTMTKDAERGKLKRRAIATPGMQIRGFVYFVETLARSICEKLEQSGLPVGGNEKKAKLANVVRKMMTNSQDTELSFTITGDNTKWNENQNPRMFLAMITYITKNQPEWFRNILSIAPIMFSNKMARLGKGYMFESKRMKLRTQIPAEMLASIDLKYFNESTRKKIEKIRPLLIDGTASLSPGMMMGMFNMLSTVLGVSILNLGQKKYTKTTYWWDGLQSSDDFALIVNAPNHEGIQAGVDRFYRTCKLVGINMSKKKSYINRTGTFEFTSFFYRYGFVANFSMELPSFGVSGINESADMSIGVTVIKNNMINNDLGPATAQMALQLFIKDYRYTYRCHRGDTQIQTRRSFELKKLWEQTRSKAGLLVSDGGPNLYNIRNLHIPEVCLKWELMDEDYQGRLCNPLNPFVSHKEIESVNNAVVMPAHGPAKSMEYDAVATTHSWIPKRNRSILNTSQRGILEDEQMYQKCCNLFEKFFPSSSYRRPVGISSMVEAMVSRARIDARIDFESGRIKKEEFSEIMKICSTIEELRRQK.

Positions 54–77 are disordered; the sequence is KWTTNTETGAAQLNPIDGPLPEDN. A compositionally biased stretch (polar residues) spans 55-64; it reads WTTNTETGAA. 2 consecutive short sequence motifs (nuclear localization signal) follow at residues 187–195 and 203–216; these read RKRRVRDNM and RTIGKKKQRVNKRS. The segment at 249 to 256 is promoter-binding site; that stretch reads RGFVYFVE. In terms of domain architecture, RdRp catalytic spans 286–483; sequence VRKMMTNSQD…GINMSKKKSY (198 aa).

Belongs to the influenza viruses polymerase PB1 family. As to quaternary structure, influenza RNA polymerase is composed of three subunits: PB1, PB2 and PA. Interacts (via N-terminus) with PA (via C-terminus). Interacts (via C-terminus) with PB2 (via N-terminus); this interaction is essential for transcription initiation. In terms of processing, phosphorylated by host PRKCA.

It is found in the host nucleus. The protein localises to the host cytoplasm. It catalyses the reaction RNA(n) + a ribonucleoside 5'-triphosphate = RNA(n+1) + diphosphate. Functionally, RNA-dependent RNA polymerase which is responsible for replication and transcription of virus RNA segments. The transcription of viral mRNAs occurs by a unique mechanism called cap-snatching. 5' methylated caps of cellular mRNAs are cleaved after 10-13 nucleotides by PA. In turn, these short capped RNAs are used as primers by PB1 for transcription of viral mRNAs. During virus replication, PB1 initiates RNA synthesis and copy vRNA into complementary RNA (cRNA) which in turn serves as a template for the production of more vRNAs. This is RNA-directed RNA polymerase catalytic subunit from Aves (whales).